Consider the following 213-residue polypeptide: Pyrrolidone-carboxylate peptidase (213 aa).

Catalysis depends on residues Glu-78, Cys-141, and His-165.

It belongs to the peptidase C15 family. As to quaternary structure, homotetramer.

It localises to the cytoplasm. The catalysed reaction is Release of an N-terminal pyroglutamyl group from a polypeptide, the second amino acid generally not being Pro.. Functionally, removes 5-oxoproline from various penultimate amino acid residues except L-proline. The chain is Pyrrolidone-carboxylate peptidase from Finegoldia magna (strain ATCC 29328 / DSM 20472 / WAL 2508) (Peptostreptococcus magnus).